The following is a 39-amino-acid chain: Omega-theraphotoxin-Bs1b (39 aa).

Intrachain disulfides connect C4–C25, C8–C31, and C17–C36.

It belongs to the neurotoxin 12 (Hwtx-2) family. 06 (TXP1) subfamily. Expressed by the venom gland.

It localises to the secreted. Its function is as follows. Inhibits voltage-gated calcium channels (Cav) in rat cerebellar granule cells. Has insecticidal activity. This chain is Omega-theraphotoxin-Bs1b, found in Brachypelma smithi (Mexican red knee tarantula).